A 318-amino-acid polypeptide reads, in one-letter code: NAD(P)H-dependent D-xylose reductase (318 aa).

Tyrosine 48 acts as the Proton donor in catalysis. Substrate is bound at residue histidine 110. Residues serine 165 to asparagine 166, serine 214 to glutamate 223, and lysine 270 to asparagine 280 contribute to the NAD(+) site.

It belongs to the aldo/keto reductase family.

It carries out the reaction xylitol + NAD(+) = D-xylose + NADH + H(+). The enzyme catalyses xylitol + NADP(+) = D-xylose + NADPH + H(+). Its pathway is carbohydrate metabolism; D-xylose degradation. NADP(+) is a potent inhibitor of both the NADPH- and NADH-linked xylose reduction, whereas NAD(+) showS strong inhibition only with the NADH-linked reaction. Reduces D-xylose into xylitol. Has a preference for NADPH, but can also utilize NADH as cosubstrate. The sequence is that of NAD(P)H-dependent D-xylose reductase (XYL1) from Scheffersomyces stipitis (strain ATCC 58785 / CBS 6054 / NBRC 10063 / NRRL Y-11545) (Yeast).